The sequence spans 837 residues: V-type proton ATPase 116 kDa subunit a 1 (837 aa).

The Cytoplasmic portion of the chain corresponds to 1–388; it reads MGELFRSEEM…DAYGIGSYRE (388 aa). The chain crosses the membrane as a helical span at residues 389-407; the sequence is INPAPYTIITFPFLFAVMF. The Vacuolar segment spans residues 408–409; sequence GD. A helical membrane pass occupies residues 410–426; that stretch reads FGHGILMTLFAVWMVVR. The Cytoplasmic segment spans residues 427 to 441; it reads ESRILSQKIDNELFT. Residues 442 to 471 form a helical membrane-spanning segment; the sequence is MMFSGRYIILLMGLFSIYTGLIYNDCFSKA. Residues 472 to 534 lie on the Vacuolar side of the membrane; the sequence is LNLFGSSWSV…ATNKLTFLNS (63 aa). Residues 535–554 form a helical membrane-spanning segment; that stretch reads FKMKMSVVLGIIHMTFGVAL. Topologically, residues 555-572 are cytoplasmic; that stretch reads SLLNHIYFKKPLNIYLGF. Residues 573–593 traverse the membrane as a helical segment; sequence IPEMIFMTTLFGYLVILIIYK. Residues 594-638 lie on the Vacuolar side of the membrane; that stretch reads WCAYDASTSMVAPSLLIHFINMFLFSYQDTSLPMLYKGQMGLQCF. Residues 639-658 form a helical membrane-spanning segment; the sequence is LVVCAIICVPWMLVVKPLIL. At 659–724 the chain is on the cytoplasmic side; the sequence is RRQYLRRKHL…DTVVHQAIHT (66 aa). A helical membrane pass occupies residues 725-749; that stretch reads IEYCLGCISNTASYLRLWALSLAHA. The Vacuolar segment spans residues 750–770; it reads QLSEVLWTMVMHVGLSIRSLG. The chain crosses the membrane as a helical span at residues 771–809; it reads GGIALVFVFSAFATLTIAILLIMEGLSAFLHALRLHWVE. Topologically, residues 810–837 are cytoplasmic; it reads FQNKFYMGTGFKFLPFSFENIREGKFDE.

It belongs to the V-ATPase 116 kDa subunit family. V-ATPase is a heteromultimeric enzyme made up of two complexes: the ATP-hydrolytic V1 complex and the proton translocation V0 complex. The V1 complex consists of three catalytic AB heterodimers that form a heterohexamer, three peripheral stalks each consisting of EG heterodimers, one central rotor including subunits D and F, and the regulatory subunits C and H. The proton translocation complex V0 consists of the proton transport subunit a, a ring of proteolipid subunits c9c'', rotary subunit d, subunits e and f, and two accessory subunits.

The protein localises to the cytoplasmic vesicle. It localises to the clathrin-coated vesicle membrane. It is found in the secretory vesicle. Its subcellular location is the synaptic vesicle membrane. The protein resides in the melanosome. In terms of biological role, subunit of the V0 complex of vacuolar(H+)-ATPase (V-ATPase), a multisubunit enzyme composed of a peripheral complex (V1) that hydrolyzes ATP and a membrane integral complex (V0) that translocates protons. V-ATPase is responsible for acidifying and maintaining the pH of intracellular compartments and in some cell types, is targeted to the plasma membrane, where it is responsible for acidifying the extracellular environment. Required for assembly and activity of the vacuolar ATPase. The polypeptide is V-type proton ATPase 116 kDa subunit a 1 (atp6v0a1) (Xenopus tropicalis (Western clawed frog)).